Here is a 261-residue protein sequence, read N- to C-terminus: Putative diacylated glycolipid transporter LprF (261 aa).

A signal peptide spans 1–38; the sequence is MNGLISQACGSHRPRRPSSLGAVAILIAATLFATVVAG. A lipid anchor (N-palmitoyl cysteine) is attached at Cys39. A lipid anchor (S-diacylglycerol cysteine) is attached at Cys39. Positions 42–61 are disordered; the sequence is KPTTASSPSPGSPSPEAQQI.

Belongs to the LppX/LprAFG lipoprotein family. Monomer. Modified by Lgt on Cys-39 with an S-linked diacylglycerol with a mixture of C16, C18 and C19 fatty acids (palmitic, stearic and tuberculostearic acid respectively), signal peptide is removed by LspA, modified by Lnt with an amide-linked mixture of C16 and C19 fatty acids.

It is found in the cell membrane. Might be involved in transporting short diacylated glycolipids to the cell outer membrane. Binds glycolipids that contain a diacylated glycerophosphate or a diacylated phosphatidylinositol moiety with C14 and C16 chains (upon overexpression in M.smegmatis; M.smegmatis does not encode this gene). Overexpression in M.smegmatis increases the cell wall glycolipid LAM/LM ratio (lipoarabinomannan/lipomannan), suggesting perhaps this protein is involved in the preferential translocation of diacylated LAM to the outer cell membrane. Overexpressing M.smegmatis cells adhere less well to hexadecane droplets, indicating decrease in the hydrophobicity of the cell surface, and have a slightly increased resistance to the antibiotic ethambutol. This chain is Putative diacylated glycolipid transporter LprF (lprF), found in Mycobacterium bovis (strain ATCC BAA-935 / AF2122/97).